Here is a 190-residue protein sequence, read N- to C-terminus: MVARGETRSAALLAVALQVLIRDGYDRFSMDSVAALAHASKTTIYRRWSNKAELIKAALDAHDASFNDEVFDTGGLRTDLIATMGMLRRKAQALPPTLYPDLIRAMEHDETLSDAIRRHLADPGLSPFDAPLSRAVGRGEAGVDVDRQLIHDVAEAMLTHRLTLGGPLDDAFIGRLVDDVLLVLIRPGAR.

Positions 6-66 constitute an HTH tetR-type domain; the sequence is ETRSAALLAV…AALDAHDASF (61 aa). Residues 29–48 constitute a DNA-binding region (H-T-H motif); the sequence is SMDSVAALAHASKTTIYRRW.

Homodimer.

In terms of biological role, binds to its own palindromic promoter and represses transcription of its operon; addition of tetracycline or doxycycline (but not tigecycline) interferes with DNA binding. Addition of TetX to the DNA-TetR-antibiotic complex restores DNA binding. This chain is DNA-binding transcriptional repressor TetR, found in Mycobacteroides abscessus (strain ATCC 19977 / DSM 44196 / CCUG 20993 / CIP 104536 / JCM 13569 / NCTC 13031 / TMC 1543 / L948) (Mycobacterium abscessus).